We begin with the raw amino-acid sequence, 109 residues long: Nucleoid-associated protein Spro_1136 (109 aa).

Disordered regions lie at residues 1-21 and 90-109; these read MFGKGGLGNLMKQAQQMQEKM and EKMASVSNGMQLPPGFKMPF. Residues 11–21 are compositionally biased toward low complexity; the sequence is MKQAQQMQEKM.

Belongs to the YbaB/EbfC family. Homodimer.

It localises to the cytoplasm. The protein resides in the nucleoid. Its function is as follows. Binds to DNA and alters its conformation. May be involved in regulation of gene expression, nucleoid organization and DNA protection. This Serratia proteamaculans (strain 568) protein is Nucleoid-associated protein Spro_1136.